Here is a 56-residue protein sequence, read N- to C-terminus: MSGSGAMLLGLLILVAMATSLDTREICWNHSECDDPSEWCCRMGSGHGSCQPVCRP.

An N-terminal signal peptide occupies residues 1-23; sequence MSGSGAMLLGLLILVAMATSLDT. Cystine bridges form between Cys-27–Cys-41, Cys-33–Cys-50, and Cys-40–Cys-54.

As to expression, expressed by the venom duct.

Its subcellular location is the secreted. Functionally, probable neurotoxin. The sequence is that of Conotoxin Cal6.41b from Californiconus californicus (California cone).